The following is a 225-amino-acid chain: Uracil-DNA glycosylase (225 aa).

The active-site Proton acceptor is D65.

This sequence belongs to the uracil-DNA glycosylase (UDG) superfamily. UNG family.

Its subcellular location is the cytoplasm. It catalyses the reaction Hydrolyzes single-stranded DNA or mismatched double-stranded DNA and polynucleotides, releasing free uracil.. Its function is as follows. Excises uracil residues from the DNA which can arise as a result of misincorporation of dUMP residues by DNA polymerase or due to deamination of cytosine. The polypeptide is Uracil-DNA glycosylase (Clostridium perfringens (strain 13 / Type A)).